We begin with the raw amino-acid sequence, 124 residues long: 14 kDa peptide of ubiquinol-cytochrome c2 oxidoreductase complex (124 aa).

Residues 85-102 (LGGFASGALLALALAGIF) traverse the membrane as a helical segment.

The protein resides in the cell inner membrane. Component of the ubiquinol-cytochrome c reductase complex (complex III or cytochrome b-c1 complex), which is a respiratory chain that generates an electrochemical potential coupled to ATP synthesis. The sequence is that of 14 kDa peptide of ubiquinol-cytochrome c2 oxidoreductase complex from Cereibacter sphaeroides (Rhodobacter sphaeroides).